A 482-amino-acid polypeptide reads, in one-letter code: tRNA sulfurtransferase (482 aa).

In terms of domain architecture, THUMP spans 61–165 (LAIRDALTRI…DDRLLLIKGR (105 aa)). ATP is bound by residues 183-184 (LI), K265, G287, and Q296. The cysteines at positions 344 and 456 are disulfide-linked. The region spanning 404–482 (FGANDVILDI…GFANVKVYRP (79 aa)) is the Rhodanese domain. C456 (cysteine persulfide intermediate) is an active-site residue.

Belongs to the ThiI family.

The protein resides in the cytoplasm. The enzyme catalyses [ThiI sulfur-carrier protein]-S-sulfanyl-L-cysteine + a uridine in tRNA + 2 reduced [2Fe-2S]-[ferredoxin] + ATP + H(+) = [ThiI sulfur-carrier protein]-L-cysteine + a 4-thiouridine in tRNA + 2 oxidized [2Fe-2S]-[ferredoxin] + AMP + diphosphate. It catalyses the reaction [ThiS sulfur-carrier protein]-C-terminal Gly-Gly-AMP + S-sulfanyl-L-cysteinyl-[cysteine desulfurase] + AH2 = [ThiS sulfur-carrier protein]-C-terminal-Gly-aminoethanethioate + L-cysteinyl-[cysteine desulfurase] + A + AMP + 2 H(+). It participates in cofactor biosynthesis; thiamine diphosphate biosynthesis. In terms of biological role, catalyzes the ATP-dependent transfer of a sulfur to tRNA to produce 4-thiouridine in position 8 of tRNAs, which functions as a near-UV photosensor. Also catalyzes the transfer of sulfur to the sulfur carrier protein ThiS, forming ThiS-thiocarboxylate. This is a step in the synthesis of thiazole, in the thiamine biosynthesis pathway. The sulfur is donated as persulfide by IscS. This is tRNA sulfurtransferase from Salmonella paratyphi B (strain ATCC BAA-1250 / SPB7).